Consider the following 307-residue polypeptide: L-lactate dehydrogenase (307 aa).

NAD(+) is bound by residues Val13, Asp34, Arg39, Tyr64, and 78–79 (GV). Residue Arg87 coordinates substrate. Ser100 contributes to the NAD(+) binding site. 119 to 122 (NPVD) is a substrate binding site. Position 142 (Thr142) interacts with NAD(+). 147–150 (DSAR) contacts substrate. The Proton acceptor role is filled by His174. Position 224 (Thr224) interacts with substrate.

Belongs to the LDH/MDH superfamily. LDH family. As to quaternary structure, homotetramer.

It localises to the cytoplasm. It catalyses the reaction (S)-lactate + NAD(+) = pyruvate + NADH + H(+). Its pathway is fermentation; pyruvate fermentation to lactate; (S)-lactate from pyruvate: step 1/1. In terms of biological role, catalyzes the conversion of lactate to pyruvate. The sequence is that of L-lactate dehydrogenase from Lactobacillus delbrueckii subsp. bulgaricus (strain ATCC BAA-365 / Lb-18).